The chain runs to 323 residues: GTP 3',8-cyclase (323 aa).

The Radical SAM core domain maps to 4-226 (TFQRQINYLR…LEPFPDLATN (223 aa)). Arg-13 is a binding site for GTP. Positions 20 and 24 each coordinate [4Fe-4S] cluster. Tyr-26 provides a ligand contact to S-adenosyl-L-methionine. Cys-27 provides a ligand contact to [4Fe-4S] cluster. Arg-63 is a GTP binding site. Gly-67 contributes to the S-adenosyl-L-methionine binding site. Position 94 (Thr-94) interacts with GTP. Ser-118 lines the S-adenosyl-L-methionine pocket. Lys-155 is a binding site for GTP. Met-189 serves as a coordination point for S-adenosyl-L-methionine. [4Fe-4S] cluster is bound by residues Cys-252 and Cys-255. 257-259 (RLR) is a binding site for GTP. Cys-269 lines the [4Fe-4S] cluster pocket.

It belongs to the radical SAM superfamily. MoaA family. In terms of assembly, monomer and homodimer. [4Fe-4S] cluster is required as a cofactor.

The enzyme catalyses GTP + AH2 + S-adenosyl-L-methionine = (8S)-3',8-cyclo-7,8-dihydroguanosine 5'-triphosphate + 5'-deoxyadenosine + L-methionine + A + H(+). It participates in cofactor biosynthesis; molybdopterin biosynthesis. Catalyzes the cyclization of GTP to (8S)-3',8-cyclo-7,8-dihydroguanosine 5'-triphosphate. The sequence is that of GTP 3',8-cyclase from Moorella thermoacetica (strain ATCC 39073 / JCM 9320).